The following is a 405-amino-acid chain: tRNA N6-adenosine threonylcarbamoyltransferase, mitochondrial (405 aa).

Residues 1–19 (MAKYISNLSRIAVVRGRVS) constitute a mitochondrion transit peptide. H138 and H142 together coordinate a divalent metal cation. Residues 160–164 (LISGG), D193, G213, E217, 320–321 (SN), and T348 contribute to the substrate site. Residue D349 coordinates a divalent metal cation.

This sequence belongs to the KAE1 / TsaD family. Monomer. A divalent metal cation serves as cofactor.

The protein localises to the mitochondrion. The enzyme catalyses L-threonylcarbamoyladenylate + adenosine(37) in tRNA = N(6)-L-threonylcarbamoyladenosine(37) in tRNA + AMP + H(+). In terms of biological role, required for the formation of a threonylcarbamoyl group on adenosine at position 37 (t(6)A37) in mitochondrial tRNAs that read codons beginning with adenine. Probably involved in the transfer of the threonylcarbamoyl moiety of threonylcarbamoyl-AMP (TC-AMP) to the N6 group of A37. Involved in mitochondrial genome maintenance. In Xenopus tropicalis (Western clawed frog), this protein is tRNA N6-adenosine threonylcarbamoyltransferase, mitochondrial.